The following is a 357-amino-acid chain: MTDLKFTDLVEPVVIDKKTALRVTVLGGGSFGTAMANLATRNGCNTMIWIRDQKMADEINQTHFNQRYLPDFNLEPELKAVSDLELAVRDRDIIFVAIPSHSFREVVKQISPYITAQAIVSLTKGIEANTFSFMSDIIREELPEVPYGVLSGPNLAKEIVAGMPSGTVIASDSELVRYAVQHALHSALFRVFGSDDVHGVELGGALKNIYAIAMGMAAAYNIGENTKSMIITRALAEMSRFAVKLGANPLTFLGLSGVGDLFATCNSPLSRNYQIGYALGSGKTLDQAIKALGQTAEGINTIVQVRTRAIELDVYMPITNALYEVIFEGAPPLNIALALMKNGHRSDVEFVLPHHQV.

The NADPH site is built by S30, F31, R51, and K124. Positions 124 and 152 each coordinate sn-glycerol 3-phosphate. NADPH is bound at residue A156. 5 residues coordinate sn-glycerol 3-phosphate: K207, D260, S270, R271, and N272. The Proton acceptor role is filled by K207. Position 271 (R271) interacts with NADPH. E297 serves as a coordination point for NADPH.

The protein belongs to the NAD-dependent glycerol-3-phosphate dehydrogenase family.

The protein resides in the cytoplasm. The enzyme catalyses sn-glycerol 3-phosphate + NAD(+) = dihydroxyacetone phosphate + NADH + H(+). It catalyses the reaction sn-glycerol 3-phosphate + NADP(+) = dihydroxyacetone phosphate + NADPH + H(+). It functions in the pathway membrane lipid metabolism; glycerophospholipid metabolism. Its function is as follows. Catalyzes the reduction of the glycolytic intermediate dihydroxyacetone phosphate (DHAP) to sn-glycerol 3-phosphate (G3P), the key precursor for phospholipid synthesis. The protein is Glycerol-3-phosphate dehydrogenase [NAD(P)+] of Acinetobacter baylyi (strain ATCC 33305 / BD413 / ADP1).